Here is a 316-residue protein sequence, read N- to C-terminus: ATP synthase gamma chain (316 aa).

It belongs to the ATPase gamma chain family. In terms of assembly, F-type ATPases have 2 components, CF(1) - the catalytic core - and CF(0) - the membrane proton channel. CF(1) has five subunits: alpha(3), beta(3), gamma(1), delta(1), epsilon(1). CF(0) has three main subunits: a, b and c.

It is found in the cellular thylakoid membrane. Produces ATP from ADP in the presence of a proton gradient across the membrane. The gamma chain is believed to be important in regulating ATPase activity and the flow of protons through the CF(0) complex. The chain is ATP synthase gamma chain from Prochlorococcus marinus (strain MIT 9312).